Consider the following 159-residue polypeptide: UPF0260 protein Avi_1324 (159 aa).

The protein belongs to the UPF0260 family.

In Allorhizobium ampelinum (strain ATCC BAA-846 / DSM 112012 / S4) (Agrobacterium vitis (strain S4)), this protein is UPF0260 protein Avi_1324.